The following is a 1367-amino-acid chain: Phospholipid-transporting ATPase C4F10.16c (1367 aa).

At methionine 1–asparagine 154 the chain is on the cytoplasmic side. The tract at residues histidine 34–glycine 104 is disordered. Over residues serine 50–aspartate 70 the composition is skewed to basic and acidic residues. Polar residues predominate over residues phenylalanine 77–valine 92. Residues isoleucine 155–phenylalanine 172 form a helical membrane-spanning segment. The Lumenal portion of the chain corresponds to cysteine 173 to leucine 177. Residues glycine 178 to isoleucine 197 traverse the membrane as a helical segment. Residues glutamate 198–aspartate 482 lie on the Cytoplasmic side of the membrane. Residues leucine 483–valine 503 form a helical membrane-spanning segment. The Lumenal segment spans residues leucine 504–glycine 531. The helical transmembrane segment at isoleucine 532–isoleucine 552 threads the bilayer. The Cytoplasmic segment spans residues threonine 553 to glutamine 1091. Residue aspartate 600 is the 4-aspartylphosphate intermediate of the active site. ATP-binding residues include aspartate 600, lysine 601, threonine 602, glutamate 724, phenylalanine 765, serine 767, lysine 770, lysine 788, arginine 822, threonine 823, threonine 902, glycine 903, aspartate 904, arginine 1009, and lysine 1015. Aspartate 600 contributes to the Mg(2+) binding site. Threonine 602 serves as a coordination point for Mg(2+). Aspartate 1035 contacts Mg(2+). ATP is bound by residues asparagine 1038 and aspartate 1039. Aspartate 1039 contributes to the Mg(2+) binding site. A helical membrane pass occupies residues methionine 1092–phenylalanine 1112. The Lumenal portion of the chain corresponds to tyrosine 1113–tyrosine 1124. The chain crosses the membrane as a helical span at residues threonine 1125–phenylalanine 1145. Topologically, residues aspartate 1146 to arginine 1174 are cytoplasmic. The helical transmembrane segment at phenylalanine 1175–phenylalanine 1197 threads the bilayer. Over lysine 1198–cysteine 1212 the chain is Lumenal. The chain crosses the membrane as a helical span at residues isoleucine 1213–leucine 1233. Topologically, residues methionine 1234–asparagine 1240 are cytoplasmic. The chain crosses the membrane as a helical span at residues leucine 1241–tyrosine 1261. The Lumenal portion of the chain corresponds to serine 1262–arginine 1276. Residues threonine 1277–proline 1297 form a helical membrane-spanning segment. Residue arginine 1298 participates in a 1,2-diacyl-sn-glycero-3-phospho-L-serine binding. Topologically, residues arginine 1298–lysine 1367 are cytoplasmic.

The protein belongs to the cation transport ATPase (P-type) (TC 3.A.3) family. Type IV subfamily. Mg(2+) is required as a cofactor.

It is found in the cell membrane. It localises to the endoplasmic reticulum membrane. The enzyme catalyses ATP + H2O + phospholipidSide 1 = ADP + phosphate + phospholipidSide 2.. The catalysed reaction is a 1,2-diacyl-sn-glycero-3-phosphoethanolamine(out) + ATP + H2O = a 1,2-diacyl-sn-glycero-3-phosphoethanolamine(in) + ADP + phosphate + H(+). It catalyses the reaction a 1,2-diacyl-sn-glycero-3-phosphocholine(out) + ATP + H2O = a 1,2-diacyl-sn-glycero-3-phosphocholine(in) + ADP + phosphate + H(+). It carries out the reaction a beta-D-glucosyl-(1&lt;-&gt;1')-N-acylsphing-4-enine(out) + ATP + H2O = a beta-D-glucosyl-(1&lt;-&gt;1')-N-acylsphing-4-enine(in) + ADP + phosphate + H(+). The enzyme catalyses a 1,2-diacyl-sn-glycero-3-phospho-L-serine(out) + ATP + H2O = a 1,2-diacyl-sn-glycero-3-phospho-L-serine(in) + ADP + phosphate + H(+). In terms of biological role, catalytic component of a P4-ATPase flippase complex which catalyzes the hydrolysis of ATP coupled to the transport of glucosylceramide, phosphatidylcholine, phosphatidylethanolamine, and small amounts of phosphatidylserine from the lumenal to the cytosolic leaflet of the cell membrane and ensures the maintenance of asymmetric distribution of phospholipids. This is Phospholipid-transporting ATPase C4F10.16c from Schizosaccharomyces pombe (strain 972 / ATCC 24843) (Fission yeast).